A 341-amino-acid chain; its full sequence is Anthranilate phosphoribosyltransferase (341 aa).

Residues glycine 79, 82–83 (GD), threonine 87, 89–92 (NIST), 107–115 (KHGNRAASS), and alanine 119 each bind 5-phospho-alpha-D-ribose 1-diphosphate. Glycine 79 is a binding site for anthranilate. Serine 91 lines the Mg(2+) pocket. An anthranilate-binding site is contributed by asparagine 110. Position 165 (arginine 165) interacts with anthranilate. The Mg(2+) site is built by aspartate 224 and glutamate 225.

This sequence belongs to the anthranilate phosphoribosyltransferase family. Homodimer. The cofactor is Mg(2+).

The enzyme catalyses N-(5-phospho-beta-D-ribosyl)anthranilate + diphosphate = 5-phospho-alpha-D-ribose 1-diphosphate + anthranilate. The protein operates within amino-acid biosynthesis; L-tryptophan biosynthesis; L-tryptophan from chorismate: step 2/5. Functionally, catalyzes the transfer of the phosphoribosyl group of 5-phosphorylribose-1-pyrophosphate (PRPP) to anthranilate to yield N-(5'-phosphoribosyl)-anthranilate (PRA). The polypeptide is Anthranilate phosphoribosyltransferase (Lacticaseibacillus casei (strain BL23) (Lactobacillus casei)).